Consider the following 444-residue polypeptide: Phosphoglucosamine mutase (444 aa).

Serine 102 functions as the Phosphoserine intermediate in the catalytic mechanism. Residues serine 102, aspartate 241, aspartate 243, and aspartate 245 each coordinate Mg(2+). Residue serine 102 is modified to Phosphoserine.

The protein belongs to the phosphohexose mutase family. Requires Mg(2+) as cofactor. In terms of processing, activated by phosphorylation.

It carries out the reaction alpha-D-glucosamine 1-phosphate = D-glucosamine 6-phosphate. Catalyzes the conversion of glucosamine-6-phosphate to glucosamine-1-phosphate. This chain is Phosphoglucosamine mutase, found in Paracidovorax citrulli (strain AAC00-1) (Acidovorax citrulli).